The sequence spans 1053 residues: Ubiquitin-like modifier-activating enzyme 6 (1053 aa).

At methionine 1 the chain carries N-acetylmethionine. Arginine 46 contacts ATP. Threonine 54 carries the post-translational modification Phosphothreonine. Alanine 470 and aspartate 497 together coordinate ATP. 2 residues coordinate Mg(2+): aspartate 499 and glutamate 502. Positions 505, 508, 509, and 521 each coordinate ATP. Position 544 is an N6-acetyllysine (lysine 544). Residue valine 545 participates in ATP binding. Residue aspartate 569 coordinates Mg(2+). Asparagine 570 provides a ligand contact to ATP. The active-site Glycyl thioester intermediate is the cysteine 625. N6-acetyllysine is present on lysine 729. At serine 737 the chain carries Phosphoserine.

Belongs to the ubiquitin-activating E1 family. Forms a thioester with UBD in cells stimulated with tumor necrosis factor-alpha (TNFa) and interferon-gamma (IFNg).

The enzyme catalyses ATP + ubiquitin + [E1 ubiquitin-activating enzyme]-L-cysteine = AMP + diphosphate + S-ubiquitinyl-[E1 ubiquitin-activating enzyme]-L-cysteine.. The protein operates within protein modification; protein ubiquitination. Its function is as follows. Activates ubiquitin by first adenylating its C-terminal glycine residue with ATP, and thereafter linking this residue to the side chain of a cysteine residue in E1, yielding a ubiquitin-E1 thioester and free AMP. Specific for ubiquitin, does not activate ubiquitin-like peptides. Also activates UBD/FAT10 conjugation via adenylation of its C-terminal glycine. Differs from UBE1 in its specificity for substrate E2 charging. Does not charge cell cycle E2s, such as CDC34. Essential for embryonic development. The protein is Ubiquitin-like modifier-activating enzyme 6 (Uba6) of Mus musculus (Mouse).